The following is a 279-amino-acid chain: Pantothenate synthetase (279 aa).

Residue 31 to 38 (MGNLHGGH) participates in ATP binding. H38 acts as the Proton donor in catalysis. Q62 serves as a coordination point for (R)-pantoate. Residue Q62 coordinates beta-alanine. Residue 150-153 (GRKD) coordinates ATP. Q156 is a binding site for (R)-pantoate. Residues V179 and 187–190 (KSSR) each bind ATP.

This sequence belongs to the pantothenate synthetase family. Homodimer.

It is found in the cytoplasm. The catalysed reaction is (R)-pantoate + beta-alanine + ATP = (R)-pantothenate + AMP + diphosphate + H(+). It participates in cofactor biosynthesis; (R)-pantothenate biosynthesis; (R)-pantothenate from (R)-pantoate and beta-alanine: step 1/1. In terms of biological role, catalyzes the condensation of pantoate with beta-alanine in an ATP-dependent reaction via a pantoyl-adenylate intermediate. The polypeptide is Pantothenate synthetase (Stenotrophomonas maltophilia (strain R551-3)).